We begin with the raw amino-acid sequence, 321 residues long: Acetyl-coenzyme A carboxylase carboxyl transferase subunit alpha (321 aa).

The CoA carboxyltransferase C-terminal domain occupies 37-298 (DLDDEIKRLQ…KQRILSDLED (262 aa)).

Belongs to the AccA family. As to quaternary structure, acetyl-CoA carboxylase is a heterohexamer composed of biotin carboxyl carrier protein (AccB), biotin carboxylase (AccC) and two subunits each of ACCase subunit alpha (AccA) and ACCase subunit beta (AccD).

It localises to the cytoplasm. It carries out the reaction N(6)-carboxybiotinyl-L-lysyl-[protein] + acetyl-CoA = N(6)-biotinyl-L-lysyl-[protein] + malonyl-CoA. It participates in lipid metabolism; malonyl-CoA biosynthesis; malonyl-CoA from acetyl-CoA: step 1/1. Component of the acetyl coenzyme A carboxylase (ACC) complex. First, biotin carboxylase catalyzes the carboxylation of biotin on its carrier protein (BCCP) and then the CO(2) group is transferred by the carboxyltransferase to acetyl-CoA to form malonyl-CoA. The protein is Acetyl-coenzyme A carboxylase carboxyl transferase subunit alpha of Mannheimia succiniciproducens (strain KCTC 0769BP / MBEL55E).